The primary structure comprises 201 residues: Holliday junction branch migration complex subunit RuvA (201 aa).

The domain I stretch occupies residues methionine 1–glutamine 63. The tract at residues threonine 64–valine 142 is domain II. The flexible linker stretch occupies residues alanine 143–serine 153. The interval serine 153–lysine 201 is domain III.

It belongs to the RuvA family. In terms of assembly, homotetramer. Forms an RuvA(8)-RuvB(12)-Holliday junction (HJ) complex. HJ DNA is sandwiched between 2 RuvA tetramers; dsDNA enters through RuvA and exits via RuvB. An RuvB hexamer assembles on each DNA strand where it exits the tetramer. Each RuvB hexamer is contacted by two RuvA subunits (via domain III) on 2 adjacent RuvB subunits; this complex drives branch migration. In the full resolvosome a probable DNA-RuvA(4)-RuvB(12)-RuvC(2) complex forms which resolves the HJ.

Its subcellular location is the cytoplasm. Functionally, the RuvA-RuvB-RuvC complex processes Holliday junction (HJ) DNA during genetic recombination and DNA repair, while the RuvA-RuvB complex plays an important role in the rescue of blocked DNA replication forks via replication fork reversal (RFR). RuvA specifically binds to HJ cruciform DNA, conferring on it an open structure. The RuvB hexamer acts as an ATP-dependent pump, pulling dsDNA into and through the RuvAB complex. HJ branch migration allows RuvC to scan DNA until it finds its consensus sequence, where it cleaves and resolves the cruciform DNA. This Listeria monocytogenes serotype 4a (strain HCC23) protein is Holliday junction branch migration complex subunit RuvA.